Consider the following 153-residue polypeptide: Ribosome maturation factor RimP (153 aa).

The protein belongs to the RimP family.

The protein localises to the cytoplasm. Its function is as follows. Required for maturation of 30S ribosomal subunits. This Nostoc sp. (strain PCC 7120 / SAG 25.82 / UTEX 2576) protein is Ribosome maturation factor RimP.